The following is a 301-amino-acid chain: uncharacterized protein (301 aa).

The FHA domain occupies 27 to 85 (YKIGRHTNKSTSPSPSNLFFNSKVLSRQHAELWLDKDTLSVYIRDVKSSNGTFVNETRL). Residues 187–236 (TGKTRDNRNNHHYSRKSSPHISSLAVPSTKHLDGERDRNLKRSTSPLSSS) are disordered. Position 204 is a phosphoserine (Ser-204). Positions 216-226 (KHLDGERDRNL) are enriched in basic and acidic residues. A Phosphoserine modification is found at Ser-231.

Interacts with sad1.

It localises to the nucleus. This is an uncharacterized protein from Schizosaccharomyces pombe (strain 972 / ATCC 24843) (Fission yeast).